The chain runs to 427 residues: Adenylosuccinate synthetase (427 aa).

Residues 12-18 (GDEGKGK) and 40-42 (GHT) each bind GTP. Residue Asp-13 is the Proton acceptor of the active site. Residues Asp-13 and Gly-40 each coordinate Mg(2+). Residues 13–16 (DEGK), 38–41 (NAGH), Thr-126, Arg-140, Gln-221, Thr-236, and Arg-299 each bind IMP. The active-site Proton donor is His-41. 295 to 301 (STTKRPR) lines the substrate pocket. GTP-binding positions include Arg-301, 327-329 (KLD), and 409-411 (SVG).

Belongs to the adenylosuccinate synthetase family. As to quaternary structure, homodimer. It depends on Mg(2+) as a cofactor.

It localises to the cytoplasm. The enzyme catalyses IMP + L-aspartate + GTP = N(6)-(1,2-dicarboxyethyl)-AMP + GDP + phosphate + 2 H(+). The protein operates within purine metabolism; AMP biosynthesis via de novo pathway; AMP from IMP: step 1/2. Plays an important role in the de novo pathway of purine nucleotide biosynthesis. Catalyzes the first committed step in the biosynthesis of AMP from IMP. The protein is Adenylosuccinate synthetase of Borrelia recurrentis (strain A1).